The primary structure comprises 121 residues: Small ribosomal subunit protein uS12 (121 aa).

The segment at 1–25 is disordered; the sequence is MPTINQLVRKNRKQKKSQSKSPVLE. A compositionally biased stretch (basic residues) spans 9-18; it reads RKNRKQKKSQ. Residue Asp89 is modified to 3-methylthioaspartic acid.

It belongs to the universal ribosomal protein uS12 family. As to quaternary structure, part of the 30S ribosomal subunit. Contacts proteins S8 and S17. May interact with IF1 in the 30S initiation complex.

With S4 and S5 plays an important role in translational accuracy. In terms of biological role, interacts with and stabilizes bases of the 16S rRNA that are involved in tRNA selection in the A site and with the mRNA backbone. Located at the interface of the 30S and 50S subunits, it traverses the body of the 30S subunit contacting proteins on the other side and probably holding the rRNA structure together. The combined cluster of proteins S8, S12 and S17 appears to hold together the shoulder and platform of the 30S subunit. This chain is Small ribosomal subunit protein uS12, found in Rhodopirellula baltica (strain DSM 10527 / NCIMB 13988 / SH1).